The following is a 441-amino-acid chain: COBRA-like protein 2 (441 aa).

The signal sequence occupies residues 1–28 (MNILFSRFSFLLLFLCSWTSFTFTTTEA). N-linked (GlcNAc...) asparagine glycosylation is found at Asn37, Asn162, Asn170, Asn209, Asn234, Asn249, Asn314, Asn329, and Asn348. A lipid anchor (GPI-anchor amidated asparagine) is attached at Asn417. A propeptide spans 418–441 (ASPNIATSPFVILLITFLSVLILM) (removed in mature form).

It belongs to the COBRA family. As to expression, expressed in roots, stems, leaves, flowers and siliques.

The protein resides in the cell membrane. The sequence is that of COBRA-like protein 2 (COBL2) from Arabidopsis thaliana (Mouse-ear cress).